The sequence spans 213 residues: Large ribosomal subunit protein uL3 (213 aa).

This sequence belongs to the universal ribosomal protein uL3 family. As to quaternary structure, part of the 50S ribosomal subunit. Forms a cluster with proteins L14 and L19.

One of the primary rRNA binding proteins, it binds directly near the 3'-end of the 23S rRNA, where it nucleates assembly of the 50S subunit. This Desulforudis audaxviator (strain MP104C) protein is Large ribosomal subunit protein uL3.